A 396-amino-acid polypeptide reads, in one-letter code: Metacaspase-1 (396 aa).

The segment covering 1-20 (MSGYPGQGYQGQGYGQGYGQ) has biased composition (gly residues). The interval 1 to 86 (MSGYPGQGYQ…PQGMQQFGHG (86 aa)) is disordered. The span at 47–62 (HYQYGPPQGGYQYPPQ) shows a compositional bias: low complexity. The span at 72 to 81 (QAHQPPQGMQ) shows a compositional bias: polar residues. Residues histidine 186 and cysteine 242 contribute to the active site.

Belongs to the peptidase C14B family.

Functionally, involved in cell death (apoptosis). The sequence is that of Metacaspase-1 (MCA1) from Pyricularia oryzae (strain 70-15 / ATCC MYA-4617 / FGSC 8958) (Rice blast fungus).